The sequence spans 243 residues: Killer cell lectin-like receptor subfamily I member 1 (243 aa).

Residues 1 to 80 (MPHSKHRDYT…RQGPKSAVWR (80 aa)) are Cytoplasmic-facing. 2 short sequence motifs (ITIM motif) span residues 16–21 (IPYTEL) and 47–52 (LKYAEL). A helical; Signal-anchor for type II membrane protein transmembrane segment spans residues 81 to 101 (VVTCVLGVLCVVLMITMGILV). Residues 102–243 (PKLFSGQEEQ…KPYACEFNKM (142 aa)) lie on the Extracellular side of the membrane. Residues asparagine 123, asparagine 191, asparagine 194, asparagine 200, and asparagine 214 are each glycosylated (N-linked (GlcNAc...) asparagine). The C-type lectin domain maps to 137–239 (FGNNFYLFFR…CSSKKPYACE (103 aa)). 2 disulfide bridges follow: cysteine 158-cysteine 238 and cysteine 217-cysteine 230.

As to quaternary structure, heterodimer with KLRE1. Interacts with PTPN6. Expressed in natural killer (NK) cells.

The protein resides in the cell membrane. Functionally, lectin-like receptor for natural killer (NK) cells. Heterodimer formation with KLRE1 mediates inhibition of NK cell cytolytic activity. The sequence is that of Killer cell lectin-like receptor subfamily I member 1 from Rattus norvegicus (Rat).